Reading from the N-terminus, the 73-residue chain is Large ribosomal subunit protein uL29 (73 aa).

This sequence belongs to the universal ribosomal protein uL29 family.

This chain is Large ribosomal subunit protein uL29 (rpmC), found in Aquifex aeolicus (strain VF5).